The primary structure comprises 105 residues: Nucleoid-associated protein lin2851 (105 aa).

The span at M1–K16 shows a compositional bias: low complexity. Residues M1–K23 are disordered.

The protein belongs to the YbaB/EbfC family. In terms of assembly, homodimer.

The protein resides in the cytoplasm. It localises to the nucleoid. Its function is as follows. Binds to DNA and alters its conformation. May be involved in regulation of gene expression, nucleoid organization and DNA protection. The sequence is that of Nucleoid-associated protein lin2851 from Listeria innocua serovar 6a (strain ATCC BAA-680 / CLIP 11262).